Reading from the N-terminus, the 501-residue chain is Glycerol kinase (501 aa).

Thr16 contacts ADP. The ATP site is built by Thr16, Thr17, and Ser18. Thr16 provides a ligand contact to sn-glycerol 3-phosphate. Arg20 is a binding site for ADP. Arg84, Glu85, Tyr135, and Asp242 together coordinate sn-glycerol 3-phosphate. Glycerol is bound by residues Arg84, Glu85, Tyr135, Asp242, and Gln243. The ADP site is built by Thr264 and Gly307. ATP is bound by residues Thr264, Gly307, Gln311, and Gly408. Residue Gly408 participates in ADP binding.

The protein belongs to the FGGY kinase family.

The enzyme catalyses glycerol + ATP = sn-glycerol 3-phosphate + ADP + H(+). It functions in the pathway polyol metabolism; glycerol degradation via glycerol kinase pathway; sn-glycerol 3-phosphate from glycerol: step 1/1. In terms of biological role, key enzyme in the regulation of glycerol uptake and metabolism. Catalyzes the phosphorylation of glycerol to yield sn-glycerol 3-phosphate. The chain is Glycerol kinase from Saccharolobus islandicus (strain M.16.27) (Sulfolobus islandicus).